A 582-amino-acid chain; its full sequence is Frizzled-10 (582 aa).

Residues 1-21 (MQHPGPRLWLVLQVMIGSCTA) form the signal peptide. The Extracellular portion of the chain corresponds to 22 to 226 (ISSMDLERPG…DVYWSRDDKR (205 aa)). The region spanning 30 to 151 (PGDGKCQPVE…NDPNYLCMEA (122 aa)) is the FZ domain. Intrachain disulfides connect C35-C96, C43-C89, C80-C118, C107-C148, and C111-C135. N-linked (GlcNAc...) asparagine glycosylation occurs at N49. Residues 153-189 (NNGSDEPSRGSGMFPPLFRPQRPHSAQEHPLKDGGPG) form a disordered region. A glycan (N-linked (GlcNAc...) asparagine) is linked at N154. Residues 227 to 247 (FAVVWLAIWSVLCFFSSAFTV) traverse the membrane as a helical segment. The Cytoplasmic portion of the chain corresponds to 248-263 (LTFLIDPSRFRYPERP). A helical membrane pass occupies residues 264-284 (IIFLSMCYCVYSVGYIIRLFA). Topologically, residues 285–312 (GAESIACDRDSGQLYVIQEGLESTGCTL) are extracellular. A helical transmembrane segment spans residues 313 to 333 (VFLVLYYFGMASSLWWVVLTL). The Cytoplasmic segment spans residues 334–352 (TWFLAAGKKWGHEAIEANS). Residues 353–373 (SYFHLAAWAIPAVKTILILVM) form a helical membrane-spanning segment. Residues 374-394 (RRVAGDELTGVCYVGSMDVNA) lie on the Extracellular side of the membrane. A helical membrane pass occupies residues 395–415 (LTGFVLVPLACYLVIGTSFIL). Over 416 to 444 (SGFVALFHIRRVMKTGGENTDKLEKLMVR) the chain is Cytoplasmic. The helical transmembrane segment at 445 to 465 (IGVFSLLYTVPATCVIACYFY) threads the bilayer. Over 466–503 (ERLNMDYWKMLATQHKCKMNNQTKTPDCLMTTSIPAVE) the chain is Extracellular. N486 is a glycosylation site (N-linked (GlcNAc...) asparagine). The chain crosses the membrane as a helical span at residues 504–524 (VFMVKVSMLLVVGITSGVWVW). The Cytoplasmic segment spans residues 525 to 582 (TSKTLQSWQHVCSRGLKRKSRRKPASVVTSAGIYKKAQHPQKPHLGKYELPAQPSACV). Residues 527–532 (KTLQSW) carry the Lys-Thr-X-X-X-Trp motif, mediates interaction with the PDZ domain of Dvl family members motif. Residues 561-582 (AQHPQKPHLGKYELPAQPSACV) are disordered. The PDZ-binding signature appears at 580-582 (ACV).

This sequence belongs to the G-protein coupled receptor Fz/Smo family. In terms of assembly, interacts with MYOC. Interacts with WNT7B. Post-translationally, ubiquitinated by ZNRF3, leading to its degradation by the proteasome.

Its subcellular location is the cell membrane. Functionally, receptor for Wnt proteins. Functions in the canonical Wnt/beta-catenin signaling pathway. The canonical Wnt/beta-catenin signaling pathway leads to the activation of disheveled proteins, inhibition of GSK-3 kinase, nuclear accumulation of beta-catenin and activation of Wnt target genes. A second signaling pathway involving PKC and calcium fluxes has been seen for some family members, but it is not yet clear if it represents a distinct pathway or if it can be integrated in the canonical pathway, as PKC seems to be required for Wnt-mediated inactivation of GSK-3 kinase. Both pathways seem to involve interactions with G-proteins. May be involved in transduction and intercellular transmission of polarity information during tissue morphogenesis and/or in differentiated tissues. This chain is Frizzled-10 (Fzd10), found in Mus musculus (Mouse).